Here is a 422-residue protein sequence, read N- to C-terminus: Probable metallocarboxypeptidase A (422 aa).

Positions 1–17 are cleaved as a signal peptide; the sequence is MRSVLSLALLAANVVTA. Residues 18 to 112 constitute a propeptide, activation peptide; sequence AVVAPFDYSG…FEAYSAGYAP (95 aa). Residues 119–419 enclose the Peptidase M14 domain; that stretch reads SYHSYQDHLS…AGTVAMLKAV (301 aa). The Zn(2+) site is built by His179 and Glu182. Substrate-binding positions include 179–182, Arg237, and 254–255; these read HARE and NR. Residues Cys248 and Cys271 are joined by a disulfide bond. His309 contributes to the Zn(2+) binding site. 310–311 contributes to the substrate binding site; the sequence is SY. Glu385 functions as the Proton donor/acceptor in the catalytic mechanism.

The protein belongs to the peptidase M14 family. It depends on Zn(2+) as a cofactor.

Its subcellular location is the secreted. Its function is as follows. Extracellular metalloprotease that contributes to pathogenicity. In Arthroderma benhamiae (strain ATCC MYA-4681 / CBS 112371) (Trichophyton mentagrophytes), this protein is Probable metallocarboxypeptidase A (MCPA).